Reading from the N-terminus, the 461-residue chain is Ribulose bisphosphate carboxylase (461 aa).

N112 contributes to the substrate binding site. The Proton acceptor role is filled by K167. Position 169 (K169) interacts with substrate. Residues K192, D194, and E195 each coordinate Mg(2+). At K192 the chain carries N6-carboxylysine. The active-site Proton acceptor is the H288. Substrate is bound by residues R289, H322, and S369.

The protein belongs to the RuBisCO large chain family. Type II subfamily. As to quaternary structure, homodimer. Requires Mg(2+) as cofactor.

It carries out the reaction 2 (2R)-3-phosphoglycerate + 2 H(+) = D-ribulose 1,5-bisphosphate + CO2 + H2O. The enzyme catalyses D-ribulose 1,5-bisphosphate + O2 = 2-phosphoglycolate + (2R)-3-phosphoglycerate + 2 H(+). In terms of biological role, ruBisCO catalyzes two reactions: the carboxylation of D-ribulose 1,5-bisphosphate, the primary event in carbon dioxide fixation, as well as the oxidative fragmentation of the pentose substrate. Both reactions occur simultaneously and in competition at the same active site. This chain is Ribulose bisphosphate carboxylase, found in Rhodopseudomonas palustris (strain ATCC BAA-98 / CGA009).